The following is a 261-amino-acid chain: Gap junction beta-6 protein (261 aa).

Residues 1 to 22 lie on the Cytoplasmic side of the membrane; the sequence is MDWGTLHTFIGGVNKHSTSIGK. The chain crosses the membrane as a helical span at residues 23 to 45; sequence VWITVIFIFRVMILVVAAQEVWG. The Extracellular portion of the chain corresponds to 46-75; that stretch reads DEQEDFVCNTLQPGCKNVCYDHFFPVSHIR. A helical transmembrane segment spans residues 76–98; that stretch reads LWALQLIFVSTPALLVAMHVAYY. At 99 to 131 the chain is on the cytoplasmic side; that stretch reads RHETTRKFRRGEKRNDFKDIEDIKKQKVRIEGS. A helical membrane pass occupies residues 132 to 154; the sequence is LWWTYTSSIFFRIIFEAAFMYVF. Residues 155 to 192 lie on the Extracellular side of the membrane; the sequence is YFLYNGYHLPWVLKCGIDPCPNLVDCFISRPTEKTVFT. The chain crosses the membrane as a helical span at residues 193–215; the sequence is IFMISASVICMLLNVAELCYLLL. Residues 216–261 are Cytoplasmic-facing; the sequence is KVCFRRSKRAQTQKNHPNHALKESKQNEMNELISDSGQNAITGFPS.

Belongs to the connexin family. Beta-type (group I) subfamily. A connexon is composed of a hexamer of connexins. Interacts with CNST.

The protein localises to the cell membrane. It localises to the cell junction. The protein resides in the gap junction. One gap junction consists of a cluster of closely packed pairs of transmembrane channels, the connexons, through which materials of low MW diffuse from one cell to a neighboring cell. The sequence is that of Gap junction beta-6 protein (GJB6) from Homo sapiens (Human).